The following is a 280-amino-acid chain: Ribonuclease Z (280 aa).

Zn(2+) contacts are provided by histidine 61, histidine 63, aspartate 65, histidine 66, histidine 153, aspartate 176, and histidine 240. Aspartate 65 functions as the Proton acceptor in the catalytic mechanism.

The protein belongs to the RNase Z family. As to quaternary structure, homodimer. It depends on Zn(2+) as a cofactor.

It carries out the reaction Endonucleolytic cleavage of RNA, removing extra 3' nucleotides from tRNA precursor, generating 3' termini of tRNAs. A 3'-hydroxy group is left at the tRNA terminus and a 5'-phosphoryl group is left at the trailer molecule.. In terms of biological role, zinc phosphodiesterase, which displays some tRNA 3'-processing endonuclease activity. Probably involved in tRNA maturation, by removing a 3'-trailer from precursor tRNA. The sequence is that of Ribonuclease Z from Mycobacterium bovis (strain BCG / Pasteur 1173P2).